Reading from the N-terminus, the 752-residue chain is Complement C2 (752 aa).

The N-terminal stretch at Met1–Ser20 is a signal peptide. Sushi domains follow at residues Pro22–Pro86, Val87–Asn146, and Gly149–Gln206. Cystine bridges form between Cys24–Cys64, Cys51–Cys84, Cys89–Cys131, Cys117–Cys144, Cys151–Cys191, and Cys177–Cys204. Residue Asn29 is glycosylated (N-linked (GlcNAc...) asparagine). Residue Asn112 is glycosylated (N-linked (GlcNAc...) asparagine). One can recognise a VWFA domain in the interval Asn254 to Met452. The MIDAS-like motif motif lies at Asp260–Ser264. Residues Ser262 and Ser264 each coordinate Mg(2+). Residues Asn290 and Asn333 are each glycosylated (N-linked (GlcNAc...) asparagine). Thr337 is a Mg(2+) binding site. Intrachain disulfides connect Cys463/Cys581, Cys492/Cys508, and Cys584/Cys600. The 281-residue stretch at Gly464–Gly744 folds into the Peptidase S1 domain. Residues Asn467 and Asn471 are each glycosylated (N-linked (GlcNAc...) asparagine). Residues His507 and Asp561 each act as charge relay system in the active site. N-linked (GlcNAc...) asparagine glycans are attached at residues Asn621 and Asn651. 2 disulfides stabilise this stretch: Cys638/Cys665 and Cys675/Cys705. The active-site Charge relay system is the Ser679.

The protein belongs to the peptidase S1 family. As to quaternary structure, serine protease component of the C3 convertase, also named C4bC2b, composed of the serine protease complement C2b and complement C4b. Serine protease component of the C5 convertase, also named C4bC2bC3b, composed of the serine protease complement C2b, complement C3b, as well as complement C4b. Requires Mg(2+) as cofactor. The cofactor is Mn(2+). Post-translationally, cleaved and activated by different proteases depending on the complement pathway to generate complement C2a and serine protease complement C2b chains. Cleaved and activated by C1S following activation by the classical complement system. Cleaved and activated by MASP2 following activation by the lectin complement system. Cleaved and activated by GZMK following activation by the GZMK complement system.

It is found in the secreted. It localises to the cell surface. The enzyme catalyses Selective cleavage of Arg-|-Ser bond in complement component C3 alpha-chain to form C3a and C3b, and Arg-|-Xaa bond in complement component C5 alpha-chain to form C5a and C5b.. Precursor of the catalytic component of the C3 and C5 convertase complexes, which are part of the complement pathway, a cascade of proteins that leads to phagocytosis and breakdown of pathogens and signaling that strengthens the adaptive immune system. Component C2 is part of the classical, lectin and GZMK complement systems. Functionally, catalytic component of the complement C3 and C5 convertase complexes. Following complement activation, recruited to the surface of pathogens by complement C4b opsonin to form the C3 convertase, or C3b and C4b opsonins to form the C5 convertase. As part of the C3 convertase, cleaves and activate C3 into C3a anaphylatoxin and C3b opsonin, the next components of the complement pathways. As part of the C5 convertase, cleaves and activate C5 into C5a anaphylatoxin and C5b component of the membrane attack complex. In Gorilla gorilla gorilla (Western lowland gorilla), this protein is Complement C2.